The primary structure comprises 172 residues: Disulfide bond formation protein B (172 aa).

At Met1–Gly13 the chain is on the cytoplasmic side. A helical membrane pass occupies residues Cys14–Val30. Residues Leu31–Ile48 lie on the Periplasmic side of the membrane. Cysteines 40 and 43 form a disulfide. The chain crosses the membrane as a helical span at residues Ala49–Pro65. At Ala66 to Gly72 the chain is on the cytoplasmic side. Residues Leu73 to Ala90 traverse the membrane as a helical segment. At Arg91 to Gln147 the chain is on the periplasmic side. Cys106 and Cys133 are joined by a disulfide. The helical transmembrane segment at Trp148–Gly166 threads the bilayer. At Ile167–Arg172 the chain is on the cytoplasmic side.

It belongs to the DsbB family.

The protein resides in the cell inner membrane. Required for disulfide bond formation in some periplasmic proteins. Acts by oxidizing the DsbA protein. The chain is Disulfide bond formation protein B from Chromohalobacter salexigens (strain ATCC BAA-138 / DSM 3043 / CIP 106854 / NCIMB 13768 / 1H11).